A 314-amino-acid polypeptide reads, in one-letter code: Lipoyl synthase (314 aa).

Cysteine 67, cysteine 72, cysteine 78, cysteine 93, cysteine 97, cysteine 100, and serine 306 together coordinate [4Fe-4S] cluster. Residues 79 to 295 (FNRGTATFMI…KNYALSIGFK (217 aa)) form the Radical SAM core domain.

The protein belongs to the radical SAM superfamily. Lipoyl synthase family. [4Fe-4S] cluster serves as cofactor.

The protein localises to the cytoplasm. The enzyme catalyses [[Fe-S] cluster scaffold protein carrying a second [4Fe-4S](2+) cluster] + N(6)-octanoyl-L-lysyl-[protein] + 2 oxidized [2Fe-2S]-[ferredoxin] + 2 S-adenosyl-L-methionine + 4 H(+) = [[Fe-S] cluster scaffold protein] + N(6)-[(R)-dihydrolipoyl]-L-lysyl-[protein] + 4 Fe(3+) + 2 hydrogen sulfide + 2 5'-deoxyadenosine + 2 L-methionine + 2 reduced [2Fe-2S]-[ferredoxin]. Its pathway is protein modification; protein lipoylation via endogenous pathway; protein N(6)-(lipoyl)lysine from octanoyl-[acyl-carrier-protein]: step 2/2. Catalyzes the radical-mediated insertion of two sulfur atoms into the C-6 and C-8 positions of the octanoyl moiety bound to the lipoyl domains of lipoate-dependent enzymes, thereby converting the octanoylated domains into lipoylated derivatives. In Buchnera aphidicola subsp. Baizongia pistaciae (strain Bp), this protein is Lipoyl synthase.